The following is a 273-amino-acid chain: SUMO-1 cysteine protease S273R (273 aa).

Active-site residues include H168 and N187. Position 226 (Q226) interacts with substrate. The Nucleophile role is filled by C232.

The protein belongs to the peptidase C63 family.

It localises to the host cytoplasm. Its subcellular location is the virion. In terms of biological role, cysteine protease that plays several role during infection including processing of the structural polyprotein or inhibition of the host immune response. Catalyzes the maturation of the pp220 and pp62 polyprotein precursors into core-shell proteins. Plays a role in the disruption of host pyroptosis via specific cleavage of gasdermin D/GSDMD. In addition, strongly decreases the host cGAS-STING signaling by targeting IKBKE via its enzymatic activity. Also impairs host FOXJ1-mediated antiviral effect via degradation of FOXJ1. This Ornithodoros (relapsing fever ticks) protein is SUMO-1 cysteine protease S273R.